The sequence spans 384 residues: Mannitol-1-phosphate 5-dehydrogenase (384 aa).

NAD(+) is bound at residue 4 to 15; the sequence is AVHFGAGNIGRG.

This sequence belongs to the mannitol dehydrogenase family.

The catalysed reaction is D-mannitol 1-phosphate + NAD(+) = beta-D-fructose 6-phosphate + NADH + H(+). This Lacticaseibacillus paracasei (strain ATCC 334 / BCRC 17002 / CCUG 31169 / CIP 107868 / KCTC 3260 / NRRL B-441) (Lactobacillus paracasei) protein is Mannitol-1-phosphate 5-dehydrogenase.